We begin with the raw amino-acid sequence, 263 residues long: Endonuclease 8 (263 aa).

The Schiff-base intermediate with DNA role is filled by proline 2. Glutamate 3 functions as the Proton donor in the catalytic mechanism. Residue lysine 53 is the Proton donor; for beta-elimination activity of the active site. Glutamine 70, arginine 125, and asparagine 169 together coordinate DNA. The FPG-type zinc-finger motif lies at 229–263 (KVFHRDGEACERCGGIIEKTTLSSRPFYWCPHCQK). The active-site Proton donor; for delta-elimination activity is the arginine 253.

Belongs to the FPG family. Zn(2+) serves as cofactor.

The catalysed reaction is 2'-deoxyribonucleotide-(2'-deoxyribose 5'-phosphate)-2'-deoxyribonucleotide-DNA = a 3'-end 2'-deoxyribonucleotide-(2,3-dehydro-2,3-deoxyribose 5'-phosphate)-DNA + a 5'-end 5'-phospho-2'-deoxyribonucleoside-DNA + H(+). Involved in base excision repair of DNA damaged by oxidation or by mutagenic agents. Acts as a DNA glycosylase that recognizes and removes damaged bases. Has a preference for oxidized pyrimidines, such as thymine glycol, 5,6-dihydrouracil and 5,6-dihydrothymine. Has AP (apurinic/apyrimidinic) lyase activity and introduces nicks in the DNA strand. Cleaves the DNA backbone by beta-delta elimination to generate a single-strand break at the site of the removed base with both 3'- and 5'-phosphates. This Salmonella agona (strain SL483) protein is Endonuclease 8.